The primary structure comprises 464 residues: Isthmin-1 (464 aa).

A signal peptide spans M1–A29. N-linked (GlcNAc...) asparagine glycosylation occurs at N39. Disordered regions lie at residues N50 to D98, P135 to S155, and S173 to G219. The segment covering V51 to L63 has biased composition (polar residues). Composition is skewed to basic and acidic residues over residues E66–A76 and E138–N147. Residues D218–P262 form the TSP type-1 domain. Disulfide bonds link C229-C256, C233-C261, and C244-C248. One can recognise an AMOP domain in the interval L289 to E452.

Belongs to the isthmin family. In terms of assembly, interacts with integrin ITGAV/ITGB5.

The protein localises to the secreted. Acts as an angiogenesis inhibitor. The polypeptide is Isthmin-1 (ISM1) (Homo sapiens (Human)).